The primary structure comprises 605 residues: Putative glutaminase 2 (605 aa).

Substrate is bound by residues Ser-213, Asn-262, Glu-308, Asn-315, Tyr-342, Tyr-394, and Val-412. 2 ANK repeats span residues 480-509 (DRLI…DLNT) and 513-543 (DDRT…DVDK). Basic and acidic residues predominate over residues 569 to 581 (KAMKRPEQHRKDS). The segment at 569–605 (KAMKRPEQHRKDSVSSLDTDDEIDDDGFPEKPSFTID) is disordered. The segment covering 586-595 (DTDDEIDDDG) has biased composition (acidic residues).

Belongs to the glutaminase family.

The catalysed reaction is L-glutamine + H2O = L-glutamate + NH4(+). This is Putative glutaminase 2 (glna-2) from Caenorhabditis elegans.